Consider the following 151-residue polypeptide: ATP synthase subunit b' (151 aa).

The chain crosses the membrane as a helical span at residues 18–38; it reads TLPLMALQVVLLTFILNALFF.

The protein belongs to the ATPase B chain family. As to quaternary structure, F-type ATPases have 2 components, F(1) - the catalytic core - and F(0) - the membrane proton channel. F(1) has five subunits: alpha(3), beta(3), gamma(1), delta(1), epsilon(1). F(0) has four main subunits: a(1), b(1), b'(1) and c(10-14). The alpha and beta chains form an alternating ring which encloses part of the gamma chain. F(1) is attached to F(0) by a central stalk formed by the gamma and epsilon chains, while a peripheral stalk is formed by the delta, b and b' chains.

The protein localises to the cellular thylakoid membrane. Its function is as follows. F(1)F(0) ATP synthase produces ATP from ADP in the presence of a proton or sodium gradient. F-type ATPases consist of two structural domains, F(1) containing the extramembraneous catalytic core and F(0) containing the membrane proton channel, linked together by a central stalk and a peripheral stalk. During catalysis, ATP synthesis in the catalytic domain of F(1) is coupled via a rotary mechanism of the central stalk subunits to proton translocation. In terms of biological role, component of the F(0) channel, it forms part of the peripheral stalk, linking F(1) to F(0). The b'-subunit is a diverged and duplicated form of b found in plants and photosynthetic bacteria. This is ATP synthase subunit b' from Prochlorococcus marinus (strain MIT 9313).